The chain runs to 38 residues: Photosystem II reaction center protein L (38 aa).

The helical transmembrane segment at 17–37 (SLFWGLLLIFVLAILFSSYIF) threads the bilayer.

Belongs to the PsbL family. In terms of assembly, PSII is composed of 1 copy each of membrane proteins PsbA, PsbB, PsbC, PsbD, PsbE, PsbF, PsbH, PsbI, PsbJ, PsbK, PsbL, PsbM, PsbT, PsbX, PsbY, PsbZ, Psb30/Ycf12, at least 3 peripheral proteins of the oxygen-evolving complex and a large number of cofactors. It forms dimeric complexes.

The protein resides in the plastid. Its subcellular location is the cyanelle thylakoid membrane. Functionally, one of the components of the core complex of photosystem II (PSII). PSII is a light-driven water:plastoquinone oxidoreductase that uses light energy to abstract electrons from H(2)O, generating O(2) and a proton gradient subsequently used for ATP formation. It consists of a core antenna complex that captures photons, and an electron transfer chain that converts photonic excitation into a charge separation. This subunit is found at the monomer-monomer interface and is required for correct PSII assembly and/or dimerization. This chain is Photosystem II reaction center protein L, found in Cyanophora paradoxa.